Here is a 786-residue protein sequence, read N- to C-terminus: Endonuclease MutS2 (786 aa).

332 to 339 (GPNTGGKT) provides a ligand contact to ATP. The region spanning 711–786 (VDLRGMDSIE…GTGVTIVELK (76 aa)) is the Smr domain.

It belongs to the DNA mismatch repair MutS family. MutS2 subfamily. In terms of assembly, homodimer. Binds to stalled ribosomes, contacting rRNA.

In terms of biological role, endonuclease that is involved in the suppression of homologous recombination and thus may have a key role in the control of bacterial genetic diversity. Functionally, acts as a ribosome collision sensor, splitting the ribosome into its 2 subunits. Detects stalled/collided 70S ribosomes which it binds and splits by an ATP-hydrolysis driven conformational change. Acts upstream of the ribosome quality control system (RQC), a ribosome-associated complex that mediates the extraction of incompletely synthesized nascent chains from stalled ribosomes and their subsequent degradation. Probably generates substrates for RQC. This Clostridium kluyveri (strain NBRC 12016) protein is Endonuclease MutS2.